The primary structure comprises 338 residues: Biotin synthase (338 aa).

The Radical SAM core domain maps to 45 to 272 (DEVQMSTLLS…QSVVRLSAGR (228 aa)). [4Fe-4S] cluster contacts are provided by cysteine 60, cysteine 64, and cysteine 67. 4 residues coordinate [2Fe-2S] cluster: cysteine 104, cysteine 135, cysteine 195, and arginine 267.

It belongs to the radical SAM superfamily. Biotin synthase family. Homodimer. It depends on [4Fe-4S] cluster as a cofactor. The cofactor is [2Fe-2S] cluster.

It catalyses the reaction (4R,5S)-dethiobiotin + (sulfur carrier)-SH + 2 reduced [2Fe-2S]-[ferredoxin] + 2 S-adenosyl-L-methionine = (sulfur carrier)-H + biotin + 2 5'-deoxyadenosine + 2 L-methionine + 2 oxidized [2Fe-2S]-[ferredoxin]. It functions in the pathway cofactor biosynthesis; biotin biosynthesis; biotin from 7,8-diaminononanoate: step 2/2. Functionally, catalyzes the conversion of dethiobiotin (DTB) to biotin by the insertion of a sulfur atom into dethiobiotin via a radical-based mechanism. This chain is Biotin synthase, found in Parvibaculum lavamentivorans (strain DS-1 / DSM 13023 / NCIMB 13966).